Consider the following 582-residue polypeptide: Inositol transporter 4 (582 aa).

The next 12 helical transmembrane spans lie at 35–55 (GIGG…LLFI), 70–90 (STIV…GGWI), 105–125 (VLFL…VIIV), 128–148 (IFVG…ISEA), 162–182 (GLLI…FVHT), 188–208 (WMLG…LSLP), 290–310 (FVGI…AGYA), 317–337 (ALSL…MMFV), 345–365 (LMII…TVFS), 456–476 (FGFL…PGMG), 494–514 (LGGG…SESF), and 525–545 (GTFL…WLLV).

The protein belongs to the major facilitator superfamily. Sugar transporter (TC 2.A.1.1) family. Highly expressed in pollen and phloem companion cells.

The protein localises to the cell membrane. In terms of biological role, plasma membrane inositol-proton symporter. Mediates high-affinity myoinositol-proton symport across the plasma membrane. Active with myoinositol, scylloinositol and D-chiroinositol. Low activity with mucoinositol and alloinositol. This is Inositol transporter 4 (INT4) from Arabidopsis thaliana (Mouse-ear cress).